Here is a 124-residue protein sequence, read N- to C-terminus: MLNIAIAVFIGGGLGSVLRWLISYRLNSLFPHFATGTLVANCIGAFIIAFGIAWFSKAPNIDPIWKIMLTTGFCGGLTTFSTFSVEVVALFNEGRIGWALGTMGANLAGSFLMTAFAFWLLREM.

Transmembrane regions (helical) follow at residues 2–22 (LNIA…RWLI), 35–55 (TGTL…IAWF), 71–91 (TGFC…VALF), and 100–120 (LGTM…AFWL). The Na(+) site is built by glycine 75 and threonine 78.

This sequence belongs to the fluoride channel Fluc/FEX (TC 1.A.43) family.

Its subcellular location is the cell inner membrane. It carries out the reaction fluoride(in) = fluoride(out). Its activity is regulated as follows. Na(+) is not transported, but it plays an essential structural role and its presence is essential for fluoride channel function. Its function is as follows. Fluoride-specific ion channel. Important for reducing fluoride concentration in the cell, thus reducing its toxicity. The sequence is that of Fluoride-specific ion channel FluC from Proteus mirabilis (strain HI4320).